Reading from the N-terminus, the 407-residue chain is uncharacterized protein (407 aa).

Positions 10–37 (DKLEQLANDVVTELTDMENKYKDLHVEL) form a coiled coil.

This is an uncharacterized protein from Bacillus subtilis (strain 168).